Here is a 161-residue protein sequence, read N- to C-terminus: Large ribosomal subunit protein uL11 (161 aa).

The protein belongs to the universal ribosomal protein uL11 family. In terms of assembly, part of the ribosomal stalk of the 50S ribosomal subunit. Interacts with L10 and the large rRNA to form the base of the stalk. L10 forms an elongated spine to which L12 dimers bind in a sequential fashion forming a multimeric L10(L12)X complex.

In terms of biological role, forms part of the ribosomal stalk which helps the ribosome interact with GTP-bound translation factors. This chain is Large ribosomal subunit protein uL11, found in Methanocaldococcus jannaschii (strain ATCC 43067 / DSM 2661 / JAL-1 / JCM 10045 / NBRC 100440) (Methanococcus jannaschii).